The chain runs to 478 residues: Alpha,alpha-trehalose-phosphate synthase [UDP-forming] (478 aa).

The D-glucose 6-phosphate site is built by tyrosine 89 and aspartate 143. Residues arginine 280 and lysine 285 each coordinate UDP. Residues arginine 280 and lysine 285 each coordinate UDP-alpha-D-glucose. Arginine 318 serves as a coordination point for D-glucose 6-phosphate. Residues isoleucine 357 and 383–387 (LVSYE) contribute to the UDP site. UDP-alpha-D-glucose-binding positions include isoleucine 357 and 379-387 (DGMNLVSYE).

This sequence belongs to the glycosyltransferase 20 family.

The enzyme catalyses D-glucose 6-phosphate + UDP-alpha-D-glucose = alpha,alpha-trehalose 6-phosphate + UDP + H(+). It functions in the pathway carbohydrate biosynthesis. With respect to regulation, inhibited by validoxylamine A, a non-reactive trehalose analog. In terms of biological role, synthase catalytic subunit of the trehalose synthase complex that catalyzes the production of trehalose from glucose-6-phosphate and UDP-alpha-D-glucose in a two step process. The polypeptide is Alpha,alpha-trehalose-phosphate synthase [UDP-forming] (Candida albicans (strain SC5314 / ATCC MYA-2876) (Yeast)).